The chain runs to 383 residues: tRNA-specific 2-thiouridylase MnmA (383 aa).

ATP contacts are provided by residues 29–36 (GMSGGVDS) and Met-55. Residues 115 to 117 (NPD) form an interaction with target base in tRNA region. Residue Cys-120 is the Nucleophile of the active site. An intrachain disulfide couples Cys-120 to Cys-217. Gly-145 provides a ligand contact to ATP. The interval 167–169 (KDQ) is interaction with tRNA. Cys-217 functions as the Cysteine persulfide intermediate in the catalytic mechanism. Residues 329–330 (RY) form an interaction with tRNA region.

It belongs to the MnmA/TRMU family.

Its subcellular location is the cytoplasm. It catalyses the reaction S-sulfanyl-L-cysteinyl-[protein] + uridine(34) in tRNA + AH2 + ATP = 2-thiouridine(34) in tRNA + L-cysteinyl-[protein] + A + AMP + diphosphate + H(+). Functionally, catalyzes the 2-thiolation of uridine at the wobble position (U34) of tRNA, leading to the formation of s(2)U34. This is tRNA-specific 2-thiouridylase MnmA from Pasteurella multocida (strain Pm70).